We begin with the raw amino-acid sequence, 944 residues long: Leucine--tRNA ligase 2 (944 aa).

The short motif at 36–46 (PYPNSPWHIGH) is the 'HIGH' region element. The 'KMSKS' region signature appears at 623-627 (KMSKS). Residue Lys626 coordinates ATP.

The protein belongs to the class-I aminoacyl-tRNA synthetase family.

The protein resides in the cytoplasm. It carries out the reaction tRNA(Leu) + L-leucine + ATP = L-leucyl-tRNA(Leu) + AMP + diphosphate. The chain is Leucine--tRNA ligase 2 from Saccharolobus solfataricus (strain ATCC 35092 / DSM 1617 / JCM 11322 / P2) (Sulfolobus solfataricus).